The chain runs to 494 residues: Glutamate decarboxylase 5 (494 aa).

Lysine 276 is subject to N6-(pyridoxal phosphate)lysine.

It belongs to the group II decarboxylase family. In terms of assembly, homohexamer. Interacts with calmodulin. It depends on pyridoxal 5'-phosphate as a cofactor. As to expression, expressed in flowers.

It catalyses the reaction L-glutamate + H(+) = 4-aminobutanoate + CO2. In terms of biological role, catalyzes the production of GABA. The calmodulin-binding is calcium-dependent and it is proposed that this may, directly or indirectly, form a calcium regulated control of GABA biosynthesis. This is Glutamate decarboxylase 5 (GAD5) from Arabidopsis thaliana (Mouse-ear cress).